The following is a 193-amino-acid chain: NAD(P)H-quinone oxidoreductase subunit J (193 aa).

Positions 1–21 (MSDSAPTNPTPTNPAPEESAS) are disordered.

The protein belongs to the complex I 30 kDa subunit family. As to quaternary structure, NDH-1 can be composed of about 15 different subunits; different subcomplexes with different compositions have been identified which probably have different functions.

Its subcellular location is the cellular thylakoid membrane. It catalyses the reaction a plastoquinone + NADH + (n+1) H(+)(in) = a plastoquinol + NAD(+) + n H(+)(out). The enzyme catalyses a plastoquinone + NADPH + (n+1) H(+)(in) = a plastoquinol + NADP(+) + n H(+)(out). NDH-1 shuttles electrons from an unknown electron donor, via FMN and iron-sulfur (Fe-S) centers, to quinones in the respiratory and/or the photosynthetic chain. The immediate electron acceptor for the enzyme in this species is believed to be plastoquinone. Couples the redox reaction to proton translocation, and thus conserves the redox energy in a proton gradient. Cyanobacterial NDH-1 also plays a role in inorganic carbon-concentration. In Synechococcus sp. (strain CC9902), this protein is NAD(P)H-quinone oxidoreductase subunit J.